A 348-amino-acid polypeptide reads, in one-letter code: Holliday junction branch migration complex subunit RuvB (348 aa).

A large ATPase domain (RuvB-L) region spans residues 4–186 (TDRIISANTV…FGIIQRLEFY (183 aa)). ATP contacts are provided by residues Ile-25, Arg-26, Gly-67, Lys-70, Thr-71, Thr-72, 133–135 (EDY), Arg-176, Tyr-186, and Arg-223. Position 71 (Thr-71) interacts with Mg(2+). The segment at 187 to 257 (SVDDLAKIVY…IADKALTMLK (71 aa)) is small ATPAse domain (RuvB-S). Residues 260–348 (PVGFDHMDHK…SSDQQQNLSL (89 aa)) are head domain (RuvB-H). DNA-binding residues include Arg-315 and Arg-320.

The protein belongs to the RuvB family. As to quaternary structure, homohexamer. Forms an RuvA(8)-RuvB(12)-Holliday junction (HJ) complex. HJ DNA is sandwiched between 2 RuvA tetramers; dsDNA enters through RuvA and exits via RuvB. An RuvB hexamer assembles on each DNA strand where it exits the tetramer. Each RuvB hexamer is contacted by two RuvA subunits (via domain III) on 2 adjacent RuvB subunits; this complex drives branch migration. In the full resolvosome a probable DNA-RuvA(4)-RuvB(12)-RuvC(2) complex forms which resolves the HJ.

It is found in the cytoplasm. The enzyme catalyses ATP + H2O = ADP + phosphate + H(+). Functionally, the RuvA-RuvB-RuvC complex processes Holliday junction (HJ) DNA during genetic recombination and DNA repair, while the RuvA-RuvB complex plays an important role in the rescue of blocked DNA replication forks via replication fork reversal (RFR). RuvA specifically binds to HJ cruciform DNA, conferring on it an open structure. The RuvB hexamer acts as an ATP-dependent pump, pulling dsDNA into and through the RuvAB complex. RuvB forms 2 homohexamers on either side of HJ DNA bound by 1 or 2 RuvA tetramers; 4 subunits per hexamer contact DNA at a time. Coordinated motions by a converter formed by DNA-disengaged RuvB subunits stimulates ATP hydrolysis and nucleotide exchange. Immobilization of the converter enables RuvB to convert the ATP-contained energy into a lever motion, pulling 2 nucleotides of DNA out of the RuvA tetramer per ATP hydrolyzed, thus driving DNA branch migration. The RuvB motors rotate together with the DNA substrate, which together with the progressing nucleotide cycle form the mechanistic basis for DNA recombination by continuous HJ branch migration. Branch migration allows RuvC to scan DNA until it finds its consensus sequence, where it cleaves and resolves cruciform DNA. The sequence is that of Holliday junction branch migration complex subunit RuvB from Francisella philomiragia subsp. philomiragia (strain ATCC 25017 / CCUG 19701 / FSC 153 / O#319-036).